We begin with the raw amino-acid sequence, 889 residues long: Disease resistance protein UNI (889 aa).

Positions 19 to 64 (NCLIGKSYIRTLEKNLRALQREMEDLRAIQHEVQNKVARDEARHQR) form a coiled coil. Residues 131 to 152 (GNFDEVSQPPPRSEVEERPTQP) are disordered. One can recognise an NB-ARC domain in the interval 137–440 (SQPPPRSEVE…CEGFIGEDQV (304 aa)). Position 179–186 (179–186 (GMGGVGKT)) interacts with ATP. LRR repeat units follow at residues 510 to 532 (WGAV…ESKC), 533 to 555 (SELT…FIRY), 557 to 580 (QKLV…ISGL), 581 to 603 (VSLQ…LKEL), 604 to 625 (KKLT…GISR), 626 to 652 (LLSL…LQQL), 653 to 676 (QNLQ…LAKL), 698 to 721 (MENL…ESET), and 825 to 848 (CPKL…EIHM).

It belongs to the disease resistance NB-LRR family. Interacts with RPT2A.

In terms of biological role, involved in disease resistance via the salicylic acid (SA) signaling pathway. Involved in shoot architecture development via the cytokinin signaling pathway. The protein is Disease resistance protein UNI of Arabidopsis thaliana (Mouse-ear cress).